Here is a 394-residue protein sequence, read N- to C-terminus: Proliferation-associated protein 2G4 (394 aa).

Residue serine 2 is modified to N-acetylserine. Serine 2 is modified (phosphoserine). Residues 2–48 (SGEDEQQEQTIAEDLVVTKYKMGGDIANRVLRSLVEASSSGVSVLSL) form a necessary for nucleolar localization region. The RNA-binding stretch occupies residues 46-54 (LSLCEKGDA). Residue lysine 298 forms a Glycyl lysine isopeptide (Lys-Gly) (interchain with G-Cter in SUMO2) linkage. The interval 301–394 (LLQPFNVLYE…ETLEENEAGD (94 aa)) is necessary for nucleolar localization. Serine 335 is modified (phosphoserine). The segment at 358–394 (LQSSASRKTQKKKKKKASKTAENATSGETLEENEAGD) is disordered. The residue at position 361 (serine 361) is a Phosphoserine; by PKC/PRKCD. Residues 361 to 375 (SASRKTQKKKKKKAS) are interaction with RNA. Residues 365–375 (KTQKKKKKKAS) are compositionally biased toward basic residues. Phosphothreonine occurs at positions 366 and 386.

Belongs to the peptidase M24 family. As to quaternary structure, isoform 2 interacts with the cytoplasmic domain of non-phosphorylated ERBB3; the interaction requires PKC activity. Interacts with AR. Treatment with HRG leads to dissociation from ERBB3 and increases association with AR. Interacts with NCL/nucleolin. Component of a ribonucleoprotein complex containing at least PA2G4, NCL, TOP1, PABPC2, RPLP0, acetylated histone H1 (HIST1H1A or H1F1), histone H1 2/4, RPL4, RPL8, RPL15, RPL18, RPL18A, RPL21, RPL11, RPL12, RPL28, RPL27, RPLP2 and RPL24. Interacts with HDAC2. Interacts with RB1; the interaction is enhanced upon PA2G4 dephosphorylation. Interacts with AKT1. Isoform 1 and isoform 2 interact with RNF20. Isoform 2 interacts with HUWE1. Interacts with DNAJC21. Phosphorylated on serine and threonine residues. Phosphorylation is enhanced by HRG treatment. Basal phosphorylation is PKC-dependent and HRG-induced phosphorylation is predominantly PKC-independent. Phosphorylation at Ser-361 by PKC/PRKCD regulates its nucleolar localization. In terms of processing, in cancer cells, isoform 2 is polyubiquitinated leading to its proteasomal degradation and phosphorylation by PKC/PRKCD enhances polyubiquitination. As to expression, isoform 2 is undetectable whereas isoform 1 is strongly expressed in cancer cells (at protein level). Isoform 1 and isoform 2 are widely expressed, including heart, brain, lung, pancreas, skeletal muscle, kidney, placenta and liver.

Its subcellular location is the cytoplasm. It localises to the nucleus. The protein localises to the nucleolus. In terms of biological role, may play a role in a ERBB3-regulated signal transduction pathway. Seems be involved in growth regulation. Acts a corepressor of the androgen receptor (AR) and is regulated by the ERBB3 ligand neuregulin-1/heregulin (HRG). Inhibits transcription of some E2F1-regulated promoters, probably by recruiting histone acetylase (HAT) activity. Binds RNA. Associates with 28S, 18S and 5.8S mature rRNAs, several rRNA precursors and probably U3 small nucleolar RNA. May be involved in regulation of intermediate and late steps of rRNA processing. May be involved in ribosome assembly. Mediates cap-independent translation of specific viral IRESs (internal ribosomal entry site). Regulates cell proliferation, differentiation, and survival. Isoform 1 suppresses apoptosis whereas isoform 2 promotes cell differentiation. The chain is Proliferation-associated protein 2G4 (PA2G4) from Homo sapiens (Human).